A 185-amino-acid polypeptide reads, in one-letter code: Ribosome-recycling factor (185 aa).

It belongs to the RRF family.

The protein localises to the cytoplasm. Its function is as follows. Responsible for the release of ribosomes from messenger RNA at the termination of protein biosynthesis. May increase the efficiency of translation by recycling ribosomes from one round of translation to another. In Bacillus cereus (strain B4264), this protein is Ribosome-recycling factor.